The chain runs to 494 residues: O-acetyltransferase ptmV (494 aa).

Positions 181–203 (ESQQDSREKLRHSGGPPDPRFDH) are disordered.

It belongs to the fumigaclavine B O-acetyltransferase family. As to quaternary structure, monomer.

It participates in secondary metabolite biosynthesis. O-acetyltransferase; part of the gene cluster that mediates the biosynthesis of the indole diterpenes penitrems. The geranylgeranyl diphosphate (GGPP) synthase ptmG catalyzes the first step in penitrem biosynthesis via conversion of farnesyl pyrophosphate and isopentyl pyrophosphate into geranylgeranyl pyrophosphate (GGPP). Condensation of indole-3-glycerol phosphate with GGPP by the prenyl transferase ptmC then forms 3-geranylgeranylindole (3-GGI). Epoxidation by the FAD-dependent monooxygenase ptmM leads to a epoxidized-GGI that is substrate of the terpene cyclase ptmB for cyclization to yield paspaline. Paspaline is subsequently converted to 13-desoxypaxilline by the cytochrome P450 monooxygenase ptmP, the latter being then converted to paxilline by the cytochrome P450 monooxygenase ptmQ. Paxilline is converted to beta-paxitriol via C-10 ketoreduction by the short-chain dehydrogenase ptmH which can be monoprenylated at the C-20 by the indole diterpene prenyltransferase ptmD. A two-step elimination (acetylation and elimination) process performed by the O-acetyltransferase ptmV and ptmI leads to the production of the prenylated form of penijanthine. The FAD-linked oxidoreductase ptmO then converts the prenylated form of penijanthine into PC-M5 which is in turn transformed into PC-M4 by the aromatic dimethylallyltransferase ptmE. Five sequential oxidative transformations performed by the cytochrome P450 monooxygenases ptmK, ptmU, ptmL, ptmN and ptmJ yield the various penitrem compounds. PtmK, ptmU and ptmM are involved in the formation of the key bicyclic ring of penitrem C via the formation of the intermediates secopenitrem D and penitrem D. PtmL catalyzes the epoxidation of penitrem D and C to yield penitrem B and F, respectively. PtmJ catalyzes the last benzylic hydroxylation to convert penitrem B to prenitrem E and penitrem F to penitrem A. This Penicillium ochrochloron protein is O-acetyltransferase ptmV.